Here is a 291-residue protein sequence, read N- to C-terminus: ATP synthase subunit a (291 aa).

A run of 5 helical transmembrane segments spans residues 48-68 (IHLD…LVFW), 108-128 (IAPL…MDLI), 161-181 (DPNI…FYSI), 241-261 (LIFI…SVPW), and 262-282 (AIFH…LTIV).

Belongs to the ATPase A chain family. In terms of assembly, F-type ATPases have 2 components, CF(1) - the catalytic core - and CF(0) - the membrane proton channel. CF(1) has five subunits: alpha(3), beta(3), gamma(1), delta(1), epsilon(1). CF(0) has three main subunits: a(1), b(2) and c(9-12). The alpha and beta chains form an alternating ring which encloses part of the gamma chain. CF(1) is attached to CF(0) by a central stalk formed by the gamma and epsilon chains, while a peripheral stalk is formed by the delta and b chains.

Its subcellular location is the cell inner membrane. Key component of the proton channel; it plays a direct role in the translocation of protons across the membrane. In Acinetobacter baylyi (strain ATCC 33305 / BD413 / ADP1), this protein is ATP synthase subunit a.